A 335-amino-acid chain; its full sequence is Antigen-presenting glycoprotein CD1d (335 aa).

A signal peptide spans 1 to 17; it reads MGCLLFLVLLEFQKIWG. Over 18 to 304 the chain is Extracellular; it reads SFEAPQTSFP…WDGKRVSRGL (287 aa). Asn38 and Asn60 each carry an N-linked (GlcNAc...) asparagine glycan. Asp98 is a binding site for a D-galactosylceramide. 2 disulfides stabilise this stretch: Cys120–Cys184 and Cys224–Cys279. Residue Asn126 is glycosylated (N-linked (GlcNAc...) asparagine). Residues Asp169, 169-172, and Thr172 contribute to the a D-galactosylceramide site; that span reads DQGT. Residues 185 to 295 form the Ig-like domain; that stretch reads PELVKGLMQT…LGDQDIILYW (111 aa). Residues 305 to 325 form a helical membrane-spanning segment; the sequence is IVVLVILVFVLLFVGGLVFWF. At 326–335 the chain is on the cytoplasmic side; it reads RKHRRYQDIS. Residues 331–334 carry the Internalization signal motif; sequence YQDI.

In terms of assembly, heterodimer with B2M (beta-2-microglobulin). Interacts with MHC II and CD74. In terms of tissue distribution, expressed on cortical thymocytes, on certain T-cell leukemias, and in various other tissues.

Its subcellular location is the cell membrane. It localises to the basolateral cell membrane. The protein localises to the endosome membrane. It is found in the lysosome membrane. The protein resides in the endoplasmic reticulum membrane. Functionally, antigen-presenting protein that binds self and non-self glycolipids and presents them to T-cell receptors on natural killer T-cells. The protein is Antigen-presenting glycoprotein CD1d (CD1D) of Ovis aries (Sheep).